The following is an 80-amino-acid chain: Exodeoxyribonuclease 7 small subunit (80 aa).

Belongs to the XseB family. In terms of assembly, heterooligomer composed of large and small subunits.

Its subcellular location is the cytoplasm. It catalyses the reaction Exonucleolytic cleavage in either 5'- to 3'- or 3'- to 5'-direction to yield nucleoside 5'-phosphates.. Its function is as follows. Bidirectionally degrades single-stranded DNA into large acid-insoluble oligonucleotides, which are then degraded further into small acid-soluble oligonucleotides. This Vibrio atlanticus (strain LGP32) (Vibrio splendidus (strain Mel32)) protein is Exodeoxyribonuclease 7 small subunit.